The chain runs to 316 residues: Nautilin-63 (316 aa).

Disordered stretches follow at residues 1–26 (IPDL…GPRG), 149–173 (PFPT…VTPF), 189–238 (DSRC…GIAS), and 259–278 (PPTS…GLNK). Low complexity predominate over residues 10-26 (TLPVLTKGPTGLLGPRG). Composition is skewed to polar residues over residues 152–163 (TSRSTYGPSGSQ), 207–216 (GHSSPATLNS), and 269–278 (SGYTSDGLNK).

In terms of processing, glycosylated; contains mainly glucose, galactose, galactosamine, glucosamine and glucuronic acid. In terms of tissue distribution, component of the acid-soluble organic matrix of nacreous shell layers (at protein level).

Its subcellular location is the secreted. In terms of biological role, involved in nacre formation. Affects morphology of calcite crystals in vitro but does not inhibit their formation. Binds chitin. This is Nautilin-63 from Nautilus macromphalus (Bellybutton nautilus).